A 116-amino-acid polypeptide reads, in one-letter code: Somatostatin (116 aa).

Positions 1–24 are cleaved as a signal peptide; the sequence is MLSCRLQCALAALSIVLALGGVTC. Positions 25–88 are excised as a propeptide; that stretch reads APSDPRLRQF…QDEMRLELQR (64 aa). Alanine amide is present on A43. The disordered stretch occupies residues 62–99; that stretch reads QTENDALEPEDLSQAAEQDEMRLELQRSANSNPAMAPR. A disulfide bridge connects residues C105 and C116.

Belongs to the somatostatin family. In terms of processing, C-terminal amidation of the neuronostatin peptide is required for its biological activity, including for the regulation of mean arterial pressure.

It localises to the secreted. Inhibits the secretion of pituitary hormones, including that of growth hormone/somatotropin (GH1), PRL, ACTH, luteinizing hormone (LH) and TSH. Also impairs ghrelin- and GnRH-stimulated secretion of GH1 and LH; the inhibition of ghrelin-stimulated secretion of GH1 can be further increased by neuronostatin. Its function is as follows. May enhance low-glucose-induced glucagon release by pancreatic alpha cells. This effect may be mediated by binding to GPR107 and PKA activation. May regulate cardiac contractile function. May compromise cardiomyocyte viability. In the central nervous system, may impair memory retention and may affect hippocampal excitability. May also have anxiolytic and anorexigenic effects. May play a role in arterial pressure regulation. May inhibit basal, but not ghrelin- or GnRH-stimulated secretion of GH1 or LH, but does not affect the release of other pituitary hormones, including PRL, ACTH, FSH or TSH. Potentiates inhibitory action of somatostatin on ghrelin-stimulated secretion of GH1, but not that on GnRH-stimulated secretion of LH. The polypeptide is Somatostatin (SST) (Canis lupus familiaris (Dog)).